A 150-amino-acid chain; its full sequence is 6,7-dimethyl-8-ribityllumazine synthase (150 aa).

5-amino-6-(D-ribitylamino)uracil contacts are provided by residues Phe-11, Val-43–Asp-45, and Ala-67–Ile-69. Residue Ala-72–Thr-73 participates in (2S)-2-hydroxy-3-oxobutyl phosphate binding. His-75 serves as the catalytic Proton donor. A 5-amino-6-(D-ribitylamino)uracil-binding site is contributed by Leu-100. A (2S)-2-hydroxy-3-oxobutyl phosphate-binding site is contributed by Arg-115.

Belongs to the DMRL synthase family.

The catalysed reaction is (2S)-2-hydroxy-3-oxobutyl phosphate + 5-amino-6-(D-ribitylamino)uracil = 6,7-dimethyl-8-(1-D-ribityl)lumazine + phosphate + 2 H2O + H(+). The protein operates within cofactor biosynthesis; riboflavin biosynthesis; riboflavin from 2-hydroxy-3-oxobutyl phosphate and 5-amino-6-(D-ribitylamino)uracil: step 1/2. Its function is as follows. Catalyzes the formation of 6,7-dimethyl-8-ribityllumazine by condensation of 5-amino-6-(D-ribitylamino)uracil with 3,4-dihydroxy-2-butanone 4-phosphate. This is the penultimate step in the biosynthesis of riboflavin. The sequence is that of 6,7-dimethyl-8-ribityllumazine synthase from Pyrobaculum calidifontis (strain DSM 21063 / JCM 11548 / VA1).